The following is a 573-amino-acid chain: Putative adenine deaminase PTO1085 (573 aa).

It belongs to the metallo-dependent hydrolases superfamily. Adenine deaminase family.

It carries out the reaction adenine + H2O + H(+) = hypoxanthine + NH4(+). The protein is Putative adenine deaminase PTO1085 of Picrophilus torridus (strain ATCC 700027 / DSM 9790 / JCM 10055 / NBRC 100828 / KAW 2/3).